The following is a 333-amino-acid chain: Transaldolase (333 aa).

Lys-136 (schiff-base intermediate with substrate) is an active-site residue.

This sequence belongs to the transaldolase family. Type 1 subfamily. As to quaternary structure, homodimer.

It localises to the cytoplasm. It catalyses the reaction D-sedoheptulose 7-phosphate + D-glyceraldehyde 3-phosphate = D-erythrose 4-phosphate + beta-D-fructose 6-phosphate. Its pathway is carbohydrate degradation; pentose phosphate pathway; D-glyceraldehyde 3-phosphate and beta-D-fructose 6-phosphate from D-ribose 5-phosphate and D-xylulose 5-phosphate (non-oxidative stage): step 2/3. In terms of biological role, transaldolase is important for the balance of metabolites in the pentose-phosphate pathway. The polypeptide is Transaldolase (Acidobacterium capsulatum (strain ATCC 51196 / DSM 11244 / BCRC 80197 / JCM 7670 / NBRC 15755 / NCIMB 13165 / 161)).